The sequence spans 49 residues: Large ribosomal subunit protein bL33B (49 aa).

The protein belongs to the bacterial ribosomal protein bL33 family.

Its function is as follows. Plays a role in sporulation at high temperatures. The polypeptide is Large ribosomal subunit protein bL33B (rpmGB) (Bacillus subtilis (strain 168)).